The chain runs to 256 residues: Photosystem I chlorophyll a/b-binding protein 5, chloroplastic (256 aa).

A chloroplast-targeting transit peptide spans 1–32 (MAVVLRGGITGGFLHHRRDASSVITRRISSVK). An N-acetylalanine modification is found at alanine 33. Position 49 (tryptophan 49) interacts with chlorophyll b. Positions 69 and 88 each coordinate chlorophyll a. Arginine 93 serves as a coordination point for chlorophyll b. 2 helical membrane passes run 94-113 (FAMLGVAGILFTDLLRTTGI) and 129-146 (FASTKTLIVVQFLLMGFA). Chlorophyll b is bound by residues glutamate 147 and arginine 150. The chlorophyll a site is built by lysine 205, glutamate 206, asparagine 209, arginine 211, glutamine 223, and histidine 238. The chain crosses the membrane as a helical span at residues 212–232 (LAMMAMLGFFVQASVTHTGPI).

The protein belongs to the light-harvesting chlorophyll a/b-binding (LHC) protein family. In terms of assembly, the LHC complex consists of chlorophyll a-b binding proteins. Homodimer. Heterodimer with LHCA2 and, possibly, LHCA3. Can substitute to LHCA4 to form a complex with LHCA1. Binds pigments. Element of the NAD(P)H dehydrogenase-photosystem I supercomplex (NDH-PSI). Binds at least 14 chlorophylls (8 Chl-a and 6 Chl-b) and carotenoids such as lutein and neoxanthin. is required as a cofactor. Photoregulated by reversible phosphorylation of its threonine residues.

The protein resides in the plastid. Its subcellular location is the chloroplast thylakoid membrane. The light-harvesting complex (LHC) functions as a light receptor, it captures and delivers excitation energy to photosystems with which it is closely associated. Seems involved in the function of the photosystem I in low light conditions, when other LHCA proteins are less abundant. Required, together with LHCA6, for the formation of a full-size NAD(P)H dehydrogenase-photosystem I supercomplex (NDH-PSI) that triggers cyclic and chlororespiratory electron transport in chloroplast thylakoids, especially under stress conditions (e.g. increased light intensity). This Arabidopsis thaliana (Mouse-ear cress) protein is Photosystem I chlorophyll a/b-binding protein 5, chloroplastic.